Here is a 177-residue protein sequence, read N- to C-terminus: Dual-action ribosomal maturation protein DarP (177 aa).

The protein belongs to the DarP family.

The protein resides in the cytoplasm. In terms of biological role, member of a network of 50S ribosomal subunit biogenesis factors which assembles along the 30S-50S interface, preventing incorrect 23S rRNA structures from forming. Promotes peptidyl transferase center (PTC) maturation. This chain is Dual-action ribosomal maturation protein DarP, found in Histophilus somni (strain 2336) (Haemophilus somnus).